The primary structure comprises 120 residues: Inner membrane protein YidG (120 aa).

Residues 1–21 are Cytoplasmic-facing; sequence MPDSRKARRIADPGLQPERTS. The helical transmembrane segment at 22-39 threads the bilayer; the sequence is LAWFRTMLGYGALMALAI. Residues 40–48 are Periplasmic-facing; the sequence is KHNWHQAGM. Residues 49–68 form a helical membrane-spanning segment; that stretch reads LFWISIGILAIVALILWHYT. Residues 69 to 90 are Cytoplasmic-facing; the sequence is RNRNLMDVTNSDFSQFHVVRDK. Residues 91-113 traverse the membrane as a helical segment; sequence FLISLAVLSLAILFAVTHIHQLI. Over 114-120 the chain is Periplasmic; that stretch reads VFIERVA.

It localises to the cell inner membrane. This chain is Inner membrane protein YidG (yidG), found in Escherichia coli O157:H7.